We begin with the raw amino-acid sequence, 179 residues long: Large ribosomal subunit protein uL5 (179 aa).

It belongs to the universal ribosomal protein uL5 family. In terms of assembly, part of the 50S ribosomal subunit; part of the 5S rRNA/L5/L18/L25 subcomplex. Contacts the 5S rRNA and the P site tRNA. Forms a bridge to the 30S subunit in the 70S ribosome.

Its function is as follows. This is one of the proteins that bind and probably mediate the attachment of the 5S RNA into the large ribosomal subunit, where it forms part of the central protuberance. In the 70S ribosome it contacts protein S13 of the 30S subunit (bridge B1b), connecting the 2 subunits; this bridge is implicated in subunit movement. Contacts the P site tRNA; the 5S rRNA and some of its associated proteins might help stabilize positioning of ribosome-bound tRNAs. This is Large ribosomal subunit protein uL5 from Bacillus velezensis (strain DSM 23117 / BGSC 10A6 / LMG 26770 / FZB42) (Bacillus amyloliquefaciens subsp. plantarum).